Consider the following 83-residue polypeptide: uncharacterized protein (83 aa).

This is an uncharacterized protein from Bacillus subtilis (strain 168).